Here is a 449-residue protein sequence, read N- to C-terminus: UDP-N-acetylmuramoylalanine--D-glutamate ligase (449 aa).

118–124 (GTNGKTT) serves as a coordination point for ATP.

The protein belongs to the MurCDEF family.

It is found in the cytoplasm. The catalysed reaction is UDP-N-acetyl-alpha-D-muramoyl-L-alanine + D-glutamate + ATP = UDP-N-acetyl-alpha-D-muramoyl-L-alanyl-D-glutamate + ADP + phosphate + H(+). Its pathway is cell wall biogenesis; peptidoglycan biosynthesis. Functionally, cell wall formation. Catalyzes the addition of glutamate to the nucleotide precursor UDP-N-acetylmuramoyl-L-alanine (UMA). The sequence is that of UDP-N-acetylmuramoylalanine--D-glutamate ligase from Staphylococcus epidermidis (strain ATCC 12228 / FDA PCI 1200).